The following is a 105-amino-acid chain: Insulin (105 aa).

Positions 1–24 (MALWTRLVPLLALLALWAPAPAHA) are cleaved as a signal peptide. 3 cysteine pairs are disulfide-bonded: cysteine 31–cysteine 91, cysteine 43–cysteine 104, and cysteine 90–cysteine 95. Residues 57–82 (EVEGPQVGALELAGGPGAGGLEGPPQ) constitute a propeptide, c peptide.

This sequence belongs to the insulin family. As to quaternary structure, heterodimer of a B chain and an A chain linked by two disulfide bonds.

It localises to the secreted. In terms of biological role, insulin decreases blood glucose concentration. It increases cell permeability to monosaccharides, amino acids and fatty acids. It accelerates glycolysis, the pentose phosphate cycle, and glycogen synthesis in liver. This Ovis aries (Sheep) protein is Insulin (INS).